Here is a 332-residue protein sequence, read N- to C-terminus: Transcription factor HBP-1b(c38) (332 aa).

The segment at 1 to 48 is disordered; the sequence is MAEASPRTETSTDDTDENLMLEPGNAALAVVSDSSDRSRDKNGDQKTM. The segment covering 34-47 has biased composition (basic and acidic residues); sequence SSDRSRDKNGDQKT. The bZIP domain maps to 44-107; that stretch reads DQKTMRRLAQ…SSADQSHSMS (64 aa). The segment at 46–66 is basic motif; that stretch reads KTMRRLAQNREAARKSRLRKK. The stretch at 47 to 142 forms a coiled coil; the sequence is TMRRLAQNRE…RAAVNAHAGD (96 aa). Positions 72-86 are leucine-zipper; sequence LENSRLKLTQLEQEL. Positions 111-329 constitute a DOG1 domain; it reads ALAFDTEYAR…RALSSLWLAR (219 aa).

This sequence belongs to the bZIP family. Binds DNA as a dimer.

The protein localises to the nucleus. Functionally, transcriptional activator that binds specifically to the DNA sequence 5'-TGACG-3'. Recognizes ocs elements like the as-1 motif of the cauliflower mosaic virus 35S promoter. Binding to the as-1-like cis elements mediate auxin- and salicylic acid-inducible transcription. Binds to the hexamer motif 5'-ACGTCA-3' of histone gene promoters. The polypeptide is Transcription factor HBP-1b(c38) (Triticum aestivum (Wheat)).